The following is a 73-amino-acid chain: UPF0235 protein PCC7424_0673 (73 aa).

The protein belongs to the UPF0235 family.

The chain is UPF0235 protein PCC7424_0673 from Gloeothece citriformis (strain PCC 7424) (Cyanothece sp. (strain PCC 7424)).